Reading from the N-terminus, the 246-residue chain is Ubiquinone/menaquinone biosynthesis C-methyltransferase UbiE (246 aa).

S-adenosyl-L-methionine contacts are provided by residues T75, D95, and 119–120 (DA).

This sequence belongs to the class I-like SAM-binding methyltransferase superfamily. MenG/UbiE family.

It catalyses the reaction a 2-demethylmenaquinol + S-adenosyl-L-methionine = a menaquinol + S-adenosyl-L-homocysteine + H(+). The enzyme catalyses a 2-methoxy-6-(all-trans-polyprenyl)benzene-1,4-diol + S-adenosyl-L-methionine = a 5-methoxy-2-methyl-3-(all-trans-polyprenyl)benzene-1,4-diol + S-adenosyl-L-homocysteine + H(+). The protein operates within quinol/quinone metabolism; menaquinone biosynthesis; menaquinol from 1,4-dihydroxy-2-naphthoate: step 2/2. It participates in cofactor biosynthesis; ubiquinone biosynthesis. In terms of biological role, methyltransferase required for the conversion of demethylmenaquinol (DMKH2) to menaquinol (MKH2) and the conversion of 2-polyprenyl-6-methoxy-1,4-benzoquinol (DDMQH2) to 2-polyprenyl-3-methyl-6-methoxy-1,4-benzoquinol (DMQH2). The polypeptide is Ubiquinone/menaquinone biosynthesis C-methyltransferase UbiE (Desulfotalea psychrophila (strain LSv54 / DSM 12343)).